The sequence spans 406 residues: Elongation factor Tu-A (406 aa).

The tr-type G domain maps to 10–215; the sequence is KPHVNVGTIG…AIDEYIPTPV (206 aa). Residues 19–26 are G1; the sequence is GHVDHGKT. 19-26 contacts GTP; sequence GHVDHGKT. Residue Thr26 participates in Mg(2+) binding. A G2 region spans residues 61 to 65; sequence GITIN. The segment at 82-85 is G3; it reads DCPG. GTP contacts are provided by residues 82–86 and 137–140; these read DCPGH and NKVD. Residues 137 to 140 are G4; it reads NKVD. Residues 175–177 are G5; the sequence is SAL. The residue at position 395 (Thr395) is a Phosphothreonine.

It belongs to the TRAFAC class translation factor GTPase superfamily. Classic translation factor GTPase family. EF-Tu/EF-1A subfamily. As to quaternary structure, monomer. Binds to the 70S ribosome, contacts tmRNA during trans-translation. In terms of processing, phosphorylated on a threonine.

It is found in the cytoplasm. The enzyme catalyses GTP + H2O = GDP + phosphate + H(+). Its function is as follows. GTP hydrolase that promotes the GTP-dependent binding of aminoacyl-tRNA to the A-site of ribosomes during protein biosynthesis. EF-Tu-GDP binds to the acceptor arm of tmRNA by interacting with its acceptor arm, suggesting that GTP hydrolysis by EF-Tu is essential for tmRNA function. Functionally, protects glycyl-tRNA(Gly) from hydrolysis by E.coli D-aminoacyl-tRNA deacylase (dtd). The chain is Elongation factor Tu-A from Thermus thermophilus (strain ATCC 27634 / DSM 579 / HB8).